A 690-amino-acid chain; its full sequence is Elongation factor G (690 aa).

In terms of domain architecture, tr-type G spans 8-283 (EDYRNFGIMA…AVVDYLPSPL (276 aa)). Residues 17 to 24 (AHIDAGKT), 81 to 85 (DTPGH), and 135 to 138 (NKMD) each bind GTP.

It belongs to the TRAFAC class translation factor GTPase superfamily. Classic translation factor GTPase family. EF-G/EF-2 subfamily.

Its subcellular location is the cytoplasm. Catalyzes the GTP-dependent ribosomal translocation step during translation elongation. During this step, the ribosome changes from the pre-translocational (PRE) to the post-translocational (POST) state as the newly formed A-site-bound peptidyl-tRNA and P-site-bound deacylated tRNA move to the P and E sites, respectively. Catalyzes the coordinated movement of the two tRNA molecules, the mRNA and conformational changes in the ribosome. The polypeptide is Elongation factor G (Rhodopseudomonas palustris (strain ATCC BAA-98 / CGA009)).